A 142-amino-acid polypeptide reads, in one-letter code: Potassium voltage-gated channel subfamily E regulatory beta subunit 5 (142 aa).

Asn-2 and Asn-25 each carry an N-linked (GlcNAc...) asparagine glycan. A helical transmembrane segment spans residues 61-81 (LYILLIMIFYACLAGGLILAY). Residues 82 to 142 (TRSRKLVEAK…PALAQGAERV (61 aa)) lie on the Cytoplasmic side of the membrane. The interval 119–142 (SQAEGRRQLASEGLPALAQGAERV) is disordered.

This sequence belongs to the potassium channel KCNE family. Interacts with KCNQ1; impairs KCNQ1 localization in lipid rafts and only conducts current upon strong and continued depolarization. Highly expressed in heart, skeletal muscle, brain, spinal cord and placenta.

The protein resides in the membrane. In terms of biological role, potassium channel ancillary subunit that is essential for generation of some native K(+) currents by virtue of formation of heteromeric ion channel complex with voltage-gated potassium (Kv) channel pore-forming alpha subunits. Functions as an inhibitory beta-subunit of the repolarizing cardiac potassium ion channel KCNQ1. The polypeptide is Potassium voltage-gated channel subfamily E regulatory beta subunit 5 (KCNE5) (Homo sapiens (Human)).